The sequence spans 391 residues: uncharacterized protein (391 aa).

2 WD repeats span residues V137–A179 and P182–E222.

It is found in the cytoplasm. It localises to the nucleus. This is an uncharacterized protein from Schizosaccharomyces pombe (strain 972 / ATCC 24843) (Fission yeast).